The following is a 125-amino-acid chain: Small ribosomal subunit protein uS12m (125 aa).

This sequence belongs to the universal ribosomal protein uS12 family.

The protein localises to the mitochondrion. Its function is as follows. Protein S12 is involved in the translation initiation step. The sequence is that of Small ribosomal subunit protein uS12m (RPS12) from Allium cepa (Onion).